A 336-amino-acid polypeptide reads, in one-letter code: Inositol 2-dehydrogenase (336 aa).

Belongs to the Gfo/Idh/MocA family. In terms of assembly, homotetramer.

The catalysed reaction is myo-inositol + NAD(+) = scyllo-inosose + NADH + H(+). In terms of biological role, involved in the oxidation of myo-inositol (MI) to 2-keto-myo-inositol (2KMI or 2-inosose). This chain is Inositol 2-dehydrogenase, found in Pseudomonas fluorescens (strain SBW25).